The sequence spans 411 residues: Arginine deiminase (411 aa).

C401 acts as the Amidino-cysteine intermediate in catalysis.

This sequence belongs to the arginine deiminase family.

The protein localises to the cytoplasm. It carries out the reaction L-arginine + H2O = L-citrulline + NH4(+). It participates in amino-acid degradation; L-arginine degradation via ADI pathway; carbamoyl phosphate from L-arginine: step 1/2. This is Arginine deiminase from Streptococcus pyogenes serotype M49 (strain NZ131).